The chain runs to 35 residues: Photosystem II reaction center protein T (35 aa).

Residues 3 to 23 (ALVYTFLLVSTLGIIFFAIFF) traverse the membrane as a helical segment.

This sequence belongs to the PsbT family. In terms of assembly, PSII is composed of 1 copy each of membrane proteins PsbA, PsbB, PsbC, PsbD, PsbE, PsbF, PsbH, PsbI, PsbJ, PsbK, PsbL, PsbM, PsbT, PsbY, PsbZ, Psb30/Ycf12, at least 3 peripheral proteins of the oxygen-evolving complex and a large number of cofactors. It forms dimeric complexes.

The protein localises to the plastid. It is found in the chloroplast thylakoid membrane. In terms of biological role, found at the monomer-monomer interface of the photosystem II (PS II) dimer, plays a role in assembly and dimerization of PSII. PSII is a light-driven water plastoquinone oxidoreductase, using light energy to abstract electrons from H(2)O, generating a proton gradient subsequently used for ATP formation. The sequence is that of Photosystem II reaction center protein T from Nelumbo lutea (American lotus).